The sequence spans 476 residues: F-box protein At5g07670 (476 aa).

An F-box domain is found at 59-111; it reads PDFTLLLPDLILIRVIQKIPNSQRKNLSLVCKRWFRLHGRLVRSFKVSDWEFL.

The chain is F-box protein At5g07670 from Arabidopsis thaliana (Mouse-ear cress).